A 129-amino-acid polypeptide reads, in one-letter code: Phosphoribosyl-AMP cyclohydrolase (129 aa).

A Mg(2+)-binding site is contributed by D79. C80 contributes to the Zn(2+) binding site. Mg(2+) contacts are provided by D81 and D83. Zn(2+)-binding residues include C96 and C103.

This sequence belongs to the PRA-CH family. As to quaternary structure, homodimer. Mg(2+) is required as a cofactor. Zn(2+) serves as cofactor.

The protein localises to the cytoplasm. The catalysed reaction is 1-(5-phospho-beta-D-ribosyl)-5'-AMP + H2O = 1-(5-phospho-beta-D-ribosyl)-5-[(5-phospho-beta-D-ribosylamino)methylideneamino]imidazole-4-carboxamide. The protein operates within amino-acid biosynthesis; L-histidine biosynthesis; L-histidine from 5-phospho-alpha-D-ribose 1-diphosphate: step 3/9. In terms of biological role, catalyzes the hydrolysis of the adenine ring of phosphoribosyl-AMP. In Magnetococcus marinus (strain ATCC BAA-1437 / JCM 17883 / MC-1), this protein is Phosphoribosyl-AMP cyclohydrolase.